Consider the following 720-residue polypeptide: Polyribonucleotide nucleotidyltransferase (720 aa).

Mg(2+) is bound by residues Asp-487 and Asp-493. The KH domain occupies Pro-554–Ile-613. In terms of domain architecture, S1 motif spans Gly-623–Lys-691. Residues Ala-692 to Glu-720 form a disordered region. Positions Leu-701–Glu-720 are enriched in basic and acidic residues.

Belongs to the polyribonucleotide nucleotidyltransferase family. Mg(2+) is required as a cofactor.

The protein resides in the cytoplasm. It catalyses the reaction RNA(n+1) + phosphate = RNA(n) + a ribonucleoside 5'-diphosphate. Its function is as follows. Involved in mRNA degradation. Catalyzes the phosphorolysis of single-stranded polyribonucleotides processively in the 3'- to 5'-direction. This is Polyribonucleotide nucleotidyltransferase from Bradyrhizobium sp. (strain BTAi1 / ATCC BAA-1182).